Reading from the N-terminus, the 964-residue chain is Siderophore exporter MmpL5 (964 aa).

12 helical membrane-spanning segments follow: residues 31–51 (FAVPIILGWLVTIAVLNVTVP), 203–223 (SLQVIEAVTFTVIIVMLLLVY), 230–250 (AIMLTMVVLGLLATRGGVAFL), 255–275 (IIGLSTFATNLLVVLAIAAAT), 302–322 (MFGGTAHVVLGSGLTIAGATF), 340–360 (AIGMVIVVAAALTLGPAIIAV), 389–409 (WPGPILVGAVALALVGLLTLP), 773–793 (TYDLMIAGISALCLIFIIMLI), 803–823 (VIVGTVVLSLGASFGLSVLIW), 826–846 (ILGIELHWLVLAMAVIILLAV), 880–900 (VVTAAGLVFAFTMMSFAVSEL), and 923–943 (SFMTPSIAALLGKWFWWPQVV).

It belongs to the resistance-nodulation-cell division (RND) (TC 2.A.6) family. MmpL subfamily. Interacts with MmpS5.

It localises to the cell inner membrane. Functionally, part of an export system, which is required for biosynthesis and secretion of siderophores. The polypeptide is Siderophore exporter MmpL5 (mmpL5) (Mycobacterium tuberculosis (strain CDC 1551 / Oshkosh)).